Here is a 205-residue protein sequence, read N- to C-terminus: Guanylate kinase (205 aa).

Positions 5 to 184 (GLLIVLSGPS…AVQKIKGIVE (180 aa)) constitute a Guanylate kinase-like domain. 12 to 19 (GPSGVGKG) is an ATP binding site.

It belongs to the guanylate kinase family.

The protein localises to the cytoplasm. It catalyses the reaction GMP + ATP = GDP + ADP. Functionally, essential for recycling GMP and indirectly, cGMP. In Listeria innocua serovar 6a (strain ATCC BAA-680 / CLIP 11262), this protein is Guanylate kinase.